The primary structure comprises 223 residues: Small ribosomal subunit protein uS3 (223 aa).

A KH type-2 domain is found at Leu38–His106.

Belongs to the universal ribosomal protein uS3 family. As to quaternary structure, part of the 30S ribosomal subunit. Forms a tight complex with proteins S10 and S14.

Binds the lower part of the 30S subunit head. Binds mRNA in the 70S ribosome, positioning it for translation. This Koribacter versatilis (strain Ellin345) protein is Small ribosomal subunit protein uS3.